We begin with the raw amino-acid sequence, 199 residues long: Fe/S biogenesis protein NfuA (199 aa).

Residues Cys-151 and Cys-154 each coordinate [4Fe-4S] cluster.

This sequence belongs to the NfuA family. In terms of assembly, homodimer. The cofactor is [4Fe-4S] cluster.

Functionally, involved in iron-sulfur cluster biogenesis. Binds a 4Fe-4S cluster, can transfer this cluster to apoproteins, and thereby intervenes in the maturation of Fe/S proteins. Could also act as a scaffold/chaperone for damaged Fe/S proteins. The sequence is that of Fe/S biogenesis protein NfuA from Xylella fastidiosa (strain 9a5c).